A 1325-amino-acid polypeptide reads, in one-letter code: Protein suppressor of sable (1325 aa).

2 disordered regions span residues 1 to 36 (MSVA…SKIQ) and 74 to 326 (VCLQ…GGSN). Positions 9–30 (PLIDLEEDLEDGEIDDDEEDEQ) are enriched in acidic residues. A compositionally biased stretch (polar residues) spans 119 to 131 (RSSNQDTSDQSLE). Positions 138–327 (ATANPLLQST…GQEKMGGSNR (190 aa)) are highly charged. Residues 149 to 158 (SSRRRKRKKE) are compositionally biased toward basic residues. A coiled-coil region spans residues 149-179 (SSRRRKRKKEREREQKKDKEQQNRSRRDEND). Basic and acidic residues predominate over residues 159–178 (REREQKKDKEQQNRSRRDEN). Residues 236 to 246 (AGLGAGGGGGY) show a composition bias toward gly residues. A coiled-coil region spans residues 276–296 (NEKEHQRGVNNRKRRDRDRLE). 2 consecutive C3H1-type zinc fingers follow at residues 330–357 (PRKL…HKEF) and 358–381 (PCKY…HGEP). The stretch at 444 to 478 (KRQDHQMQQQQQQLQHQQLQQQQEQQQTQQQAAAD) forms a coiled coil. The segment covering 499–509 (KRKSRWTEKMG) has biased composition (basic and acidic residues). Disordered stretches follow at residues 499 to 535 (KRKS…LPPH), 588 to 622 (KAED…KSNG), 639 to 695 (FSGN…PSVF), 710 to 745 (SARQ…IGGG), 780 to 835 (AHSG…ALPP), 979 to 1058 (DLET…GGSK), 1143 to 1170 (EPNG…GGGV), and 1295 to 1325 (RGGH…NRNI). Ser524 is subject to Phosphoserine. The segment covering 594 to 606 (PQTQAELESSTPP) has biased composition (polar residues). Thr604 bears the Phosphothreonine mark. The span at 644-668 (PLDDDRDDDEQLIIDDGNDSTAEED) shows a compositional bias: acidic residues. The residue at position 663 (Ser663) is a Phosphoserine. Thr664 is modified (phosphothreonine). Residues 710–726 (SARQLLPASATSPNQEN) show a composition bias toward polar residues. Residues 790 to 800 (SNENSNSNSHS) are compositionally biased toward low complexity. The segment covering 1003–1015 (SVPPPSMRVPPPN) has biased composition (pro residues). The segment covering 1021–1033 (PTVRTDPRRDPRR) has biased composition (basic and acidic residues). Low complexity predominate over residues 1042-1056 (GASTANTTAPNASGG). Gly residues-rich tracts occupy residues 1149–1170 (AALG…GGGV) and 1295–1309 (RGGH…GNGN).

The protein belongs to the suppressor of sable family. As to quaternary structure, interacts with Wdr82.

It localises to the nucleus. It is found in the chromosome. Functionally, RNA-binding protein that suppresses transcription of some RNAs. Together with Wdr82, part of a transcription termination checkpoint that promotes transcription termination of RNAs and their subsequent degradation by the nuclear exosome. Promotes transcription termination of aberrant RNAs, transcripts from genes containing a transposon inserted at their very 5' end or RNAs from heat-shock-inducible repetitive element. Binds RNA preferentially at a sequence that resembles a cryptic 5'-splice site. In Drosophila melanogaster (Fruit fly), this protein is Protein suppressor of sable.